Reading from the N-terminus, the 372-residue chain is MSRRRFDCRSVSGLLTTTPQTPIKTENFNNFYTLTPKELGRGKFAVVRQCISKSTGQEYAAKSLKKRRRGQDCRAEILHEIAVLELARSCPHVINLHEVYENATEIILVLEYAAGGEIFNLCLPELAEMVSENDVIRLIKQILEGVHYLHQNNIVHLDLKPQNILLSSIYPLGDIKIVDFGMSRKIGNASELREIMGTPEYLAPEILNYDPITTATDMWNIGIIAYMLLTHTSPFVGEDNQETYLNISQVNVDYSEEMFSSVSQLATDFIQSLLVKNPEKRPTAESCLSHSWLQQWDFGSLFHPEETSGSSQIQDLTLRSSEEKTSKSSCNGSCGAREDKENIPEDGSLVSKRFRFDDSLPSPHELVPDLFC.

One can recognise a Protein kinase domain in the interval 33 to 293 (TLTPKELGRG…AESCLSHSWL (261 aa)). ATP is bound by residues 39–47 (LGRGKFAVV) and Lys-62. The active-site Proton acceptor is the Asp-158. The interval 305 to 348 (EETSGSSQIQDLTLRSSEEKTSKSSCNGSCGAREDKENIPEDGS) is disordered. Residues 307-319 (TSGSSQIQDLTLR) are compositionally biased toward polar residues.

This sequence belongs to the protein kinase superfamily. CAMK Ser/Thr protein kinase family. DAP kinase subfamily. In terms of assembly, interacts with CHP1; the interaction induces CHP1 to translocate from the Golgi to the nucleus. In terms of processing, autophosphorylated.

It localises to the nucleus. Its subcellular location is the cell membrane. The protein resides in the endoplasmic reticulum-Golgi intermediate compartment. The enzyme catalyses L-seryl-[protein] + ATP = O-phospho-L-seryl-[protein] + ADP + H(+). It catalyses the reaction L-threonyl-[protein] + ATP = O-phospho-L-threonyl-[protein] + ADP + H(+). Its function is as follows. Acts as a positive regulator of apoptosis. Phosphorylates myosin light chains. In Mus musculus (Mouse), this protein is Serine/threonine-protein kinase 17B (Stk17b).